The sequence spans 351 residues: MEDVMKVKVEEDGIPTAVLPMEGLHDVGPPPFLSKTYEMVEDSSTDQVISWSTTRNSFIVWDSHKFSTTLLPRFFKHSNFSSFIRQLNTYGFRKVDPDRWEFANEGFLGGQKHLLKTIKRRRNVGQSMNQQGSGACIEIGYYGMEEELERLKRDKNVLMTEIVKLRQQQQSTRNQIIAMGEKIETQERKQVQMMSFLAKIFSNPTFLQQYLDKQVHRKDKQRIEVGQKRRLTMTPSVTGSDQPMNYSSSLQESEAELASIEMLFSAAMDNESSSNVRPDSVVTANGTDMEPVADDIWEELLSEDLISGDRAAEEVVVVEQPEFDVEVEDLVVKTPEWGEELQDLVDQLGFL.

A DNA-binding region spans residues 29 to 123 (PPPFLSKTYE…LLKTIKRRRN (95 aa)).

Belongs to the HSF family. As to quaternary structure, homotrimer. Post-translationally, exhibits temperature-dependent phosphorylation.

It is found in the nucleus. DNA-binding protein that specifically binds heat shock promoter elements (HSE) and activates transcription. The protein is Heat shock factor protein HSF30 (HSF30) of Solanum peruvianum (Peruvian tomato).